The following is a 1157-amino-acid chain: MACPWKFLFKAKSSRFDLTEEKDINNNLEKLRQASSSPVTQDDPKCPSRSRHRNECSQPLAETAKKSPDSLVKLDVLPPACPRHVRIKNWGSGMTFQDTLHREAKGDLACKSKSCLGAIMNPKSLTIGPRDKPTPPDELLPQAIEFVNLYYSSFKEAKIEEHLARVEAVTKEIETTGTYQLTGDELIFAAKQAWRNAPRCIGRIQWSNLQVFDARSCSTAQEMFEHICRHLRYATNNGNIRSAITVFPQRSDGKHDFRVWNAQLIRYAGYQMPDGTIIGDPASVEFTQLCIDLGWKPKYGRFDVVPLVLQADGRDPELFEIPPDLVLEVPMEHPKYEWFQELELKWYALPAVANMLLEVGGLEFPGCPFNGWYMGTEIGVRDFCDVQRYNILEEVGRRMGLETHKLASLWKDRAVVEINVAVLHSFQKQNVTIMDHHSAAESFMKYMQNEYRSRGGCPADWIWLVPPISGSITPVFHQEMLNYVLSPFYYYQVEAWKTHVWQDEKRRPRRKEIRFKVLVKAVLFAAVLMHKTMAARVRATILFATETGRSETLARDLGALFSCAFNPKVLCMDEYRLSRLEEEQLLLVVTSTFGNGGSPGNGEKLKKSLFMLKELTNKFRYAVFGLGSSMYPQFCAFAHDVDQKLSHLGASQLTPTGEGDELSGQEEAFRGWAVQTFKVACETFDVRGKHHIQIPKLYTSNVTWDPQLYRLVQDSEPLDLNKALSSMHAKYVFSMRLKSQQNLQSPQSSRTTLLVELCCEGSQGPSYLPGEHLGVFPANQPALVQGILERVVDGPAPHQPVRLETLSENGSYWVKDKRLPPCSLSQALTYFLDITTPPTQLLLRKLAQLATDEAERQRLETLCQPSDYNKWKFTNSPTFLEVLEEFPSLRVSASFLLSQLPILKPRYYSISSSRDRTPTEIHLTVAVLTYRTRDGQGPLHHGVCSTWLSSLKPQDLVPCFVRSASGFQLPEDPSRPCILIGPGTGIAPFRSFWQQRLHEAEHKGLQGGRMTLVFGCRRPDEDHLYQEEMLEMARKGVLHEVHTAYSRLPGQPKVYVQDLLRQRLAGEVLRVLHEEQGHLYVCGDVRMARDVACTLKQLVATALTLNEEQVEDYFFQLKSQKRYHEDIFGAVFPYEVKKEGAVGPPSDPRAPGAHGKS.

The DINNN-motif; mediates interaction with SPSB1, SPSB2 and SPSB4 motif lies at 23–27 (DINNN). The segment at 29-64 (EKLRQASSSPVTQDDPKCPSRSRHRNECSQPLAETA) is disordered. Cys110 and Cys115 together coordinate Zn(2+). Cys200 contributes to the heme b binding site. L-arginine is bound by residues Gln263, Trp372, Tyr373, and Glu377. (6R)-L-erythro-5,6,7,8-tetrahydrobiopterin contacts are provided by Arg381, Ile462, Trp463, and Phe476. A heme b-binding site is contributed by Tyr491. The calmodulin-binding stretch occupies residues 515–535 (FKVLVKAVLFAAVLMHKTMAA). The Flavodoxin-like domain occupies 539-677 (ATILFATETG…AFRGWAVQTF (139 aa)). 11 residues coordinate FMN: Thr545, Glu546, Thr547, Arg549, Ser550, Ser591, Thr592, Ser628, Cys635, Glu661, and Gln665. In terms of domain architecture, FAD-binding FR-type spans 730–970 (KYVFSMRLKS…VRSASGFQLP (241 aa)). Arg750 provides a ligand contact to NADP(+). The FAD site is built by His772, Arg906, Tyr908, Ser909, Thr924, and Ala926. Thr929 provides a ligand contact to NADP(+). Tyr930, Val943, Cys944, and Ser945 together coordinate FAD. NADP(+) contacts are provided by Thr984, Arg1017, Ser1046, Arg1047, Lys1053, Tyr1055, Gln1057, and Asp1090. Residues 1138–1157 (KEGAVGPPSDPRAPGAHGKS) form a disordered region.

Belongs to the NOS family. In terms of assembly, homodimer. Interacts with NHERF1. Interacts with GAPDH; induced by oxidatively-modified low-densitity lipoprotein (LDL(ox)). Interacts with S100A8 and S100A9 to form the iNOS-S100A8/9 transnitrosylase complex. Interacts with SPSB1, SPSB2 and SPSB4. Interacts with ELOC and CUL5 in the presence of SPSB1 or SPSB2 or SPSB4. Forms a complex with ASL, ASS1 and HSP90AA1; the complex regulates cell-autonomous L-arginine synthesis and citrulline recycling while channeling extracellular L-arginine to nitric oxide synthesis pathway. It depends on heme b as a cofactor. The cofactor is FAD. FMN is required as a cofactor. Requires (6R)-L-erythro-5,6,7,8-tetrahydrobiopterin as cofactor. Polyubiquitinated; mediated by SPSB1, SPSB2 and SPSB4, leading to proteasomal degradation. Detected in both stimulated and unstimulated immune cells and macrophages with little or no up-regulation following cellular stimulation with lipopolysaccharides (LPS) or concanavalin A (ConA).

The protein resides in the cytoplasm. It is found in the cytosol. It catalyses the reaction 2 L-arginine + 3 NADPH + 4 O2 + H(+) = 2 L-citrulline + 2 nitric oxide + 3 NADP(+) + 4 H2O. With respect to regulation, not stimulated by calcium/calmodulin. Its function is as follows. Produces nitric oxide (NO) which is a messenger molecule with diverse functions throughout the body. In macrophages, NO mediates tumoricidal and bactericidal actions. Also has nitrosylase activity and mediates cysteine S-nitrosylation of cytoplasmic target proteins such PTGS2/COX2. As component of the iNOS-S100A8/9 transnitrosylase complex involved in the selective inflammatory stimulus-dependent S-nitrosylation of GAPDH implicated in regulation of the GAIT complex activity and probably multiple targets including ANXA5, EZR, MSN and VIM. Involved in inflammation, enhances the synthesis of pro-inflammatory mediators such as IL6 and IL8. The polypeptide is Nitric oxide synthase, inducible (NOS2) (Sus scrofa (Pig)).